A 1173-amino-acid polypeptide reads, in one-letter code: Ubiquitin conjugation factor E4 B (1173 aa).

Position 1 is an N-acetylmethionine (Met-1). The tract at residues 1–155 (MEELSADEIR…EPSSGPEVSE (155 aa)) is disordered. The span at 16 to 33 (RLAGGQTSQPTTPLTSPQ) shows a compositional bias: low complexity. Ser-23 and Ser-31 each carry phosphoserine. The span at 51 to 64 (QSLGLNVHNMTPAT) shows a compositional bias: polar residues. Low complexity predominate over residues 76-99 (SQSSEGVSSLSSSPSNSLETQSQS). 7 positions are modified to phosphoserine: Ser-84, Ser-88, Ser-90, Ser-101, Ser-103, Ser-105, and Ser-124. The span at 134–147 (NDRREKRSLSDKEP) shows a compositional bias: basic and acidic residues. Residues Ser-238, Ser-674, and Ser-840 each carry the phosphoserine modification. The interval 928–948 (NKEQWDQLPRDQQQARQSQLA) is disordered. Over residues 937 to 948 (RDQQQARQSQLA) the composition is skewed to low complexity. The U-box domain maps to 1098 to 1171 (DAPDEFRDPL…QAWMREKQSS (74 aa)). Ser-1136 carries the post-translational modification Phosphoserine.

The protein belongs to the ubiquitin conjugation factor E4 family. As to quaternary structure, interacts with VCP. Interacts with STUB1/CHIP and UNC45B. In terms of processing, proteolytically cleaved by caspases during apoptosis. Cleaved efficiently at Asp-123 by caspase-6 and granzyme B. Cleaved with approximately 10-fold less efficiency at Asp-109 by caspase-3 and caspase-7. In terms of tissue distribution, expressed predominantly in neuronal tissues. Also detected in liver, heart, brain, kidney and testis.

It localises to the cytoplasm. The protein localises to the nucleus. It catalyses the reaction S-ubiquitinyl-[E2 ubiquitin-conjugating enzyme]-L-cysteine + [acceptor protein]-L-lysine = [E2 ubiquitin-conjugating enzyme]-L-cysteine + N(6)-ubiquitinyl-[acceptor protein]-L-lysine.. It participates in protein modification; protein ubiquitination. Functionally, ubiquitin-protein ligase that probably functions as an E3 ligase in conjunction with specific E1 and E2 ligases. May also function as an E4 ligase mediating the assembly of polyubiquitin chains on substrates ubiquitinated by another E3 ubiquitin ligase. May regulate myosin assembly in striated muscles together with STUB1 and VCP/p97 by targeting myosin chaperone UNC45B for proteasomal degradation. This chain is Ubiquitin conjugation factor E4 B, found in Mus musculus (Mouse).